The sequence spans 365 residues: Flagellar P-ring protein (365 aa).

An N-terminal signal peptide occupies residues Met-1–Ala-20.

Belongs to the FlgI family. In terms of assembly, the basal body constitutes a major portion of the flagellar organelle and consists of four rings (L,P,S, and M) mounted on a central rod.

The protein localises to the periplasm. It is found in the bacterial flagellum basal body. Assembles around the rod to form the L-ring and probably protects the motor/basal body from shearing forces during rotation. This is Flagellar P-ring protein from Thiobacillus denitrificans (strain ATCC 25259 / T1).